Here is a 433-residue protein sequence, read N- to C-terminus: MFTRLITTSVLTGAIALTIGSQAFAQTELAWWHGMTGANNEMVNELSKEFNESQSEYKIVPVYKGNYPETLNAGIAAFRSKQPPAILQVFDAGSGVMMAAEGAIVPAAEVLEKGGYKFDKSQYLPGIVAYYSKPDGTMLSFPYNSSSPILYYNKDAFKKAGLDENKPPKTWPEVFEAAKKIKASGASPCGFTSTWLTWIQTENFAAWNNVPYGTNENGLAGTDVKLEINSPLYVEHFQAIADLAKDGTFRYGGRTSEAKQLFTSGECAMLTESSGGLGDVVKSGINYGIGQLPYYEGHGPQNTIPGGASLWVFAGLSDDQYKGIAEFFNFLSQTKIQVKLHEKSGYLPVTLAAYEETKKSDFYEKNPGRETPILQMMGKEPTENSKGVRLVNLPQVRDILNEEFEAMLGGKQDAKTALDNAVKRGNAAIAAAQ.

Positions methionine 1–alanine 25 are cleaved as a signal peptide. Residues tyrosine 67, aspartate 91, serine 146, serine 273, glycine 307, tyrosine 346, and arginine 397 each contribute to the sn-glycerol 3-phosphate site.

This sequence belongs to the bacterial solute-binding protein 1 family. As to quaternary structure, the complex is composed of two ATP-binding proteins (UgpC), two transmembrane proteins (UgpA and UgpE) and a solute-binding protein (UgpB).

Its subcellular location is the periplasm. Its function is as follows. Part of the ABC transporter complex UgpBAEC involved in sn-glycerol-3-phosphate (G3P) import. Binds G3P. The chain is sn-glycerol-3-phosphate-binding periplasmic protein UgpB (ugpB) from Brucella abortus (strain 2308).